Here is a 299-residue protein sequence, read N- to C-terminus: Ciliary microtubule inner protein 2B (299 aa).

It belongs to the CIMIP2 family. As to expression, expressed in airway epithelial cells.

It localises to the cytoplasm. It is found in the cytoskeleton. Its subcellular location is the cilium axoneme. Functionally, microtubule inner protein (MIP) part of the dynein-decorated doublet microtubules (DMTs) in cilia axoneme, which is required for motile cilia beating. This Danio rerio (Zebrafish) protein is Ciliary microtubule inner protein 2B (cimip2b).